A 1095-amino-acid chain; its full sequence is MSRSAIQVAKAATYLPDLVEVQRSSFKWFLDKGLIEELDNFSPITDYTGKLELHFIGAEYKLKRPRHDVEEAKRRDATFASQMYVTCRLVNKETGEIKEQEVFIGELPLMTERGTFIINGAERVIVNQIVRSPGVYFKDEQDKNGRRTYNASVIPNRGAWLKFETDKNDLLHVRVDKTRKINAHVLMRAMGLSDNDVIDKLRHPEFYKKSIDAANEEGISSEDQALLELYKKLRPGEPPSVSGGQQLLQTRFFDPKRYDLGRVGRYKINKKLRLTIPDNLRTLTNEDVLSTLDYLINLELDVGGATLDDIDHLGNRRVRSVGELLQNQVRVGLNRLERIIKERMTVGETDSLTPAQLVNPKPLVAAIKEFFGSSQLSQFMDQTNPLAELTHKRRISALGPGGLTRERAGFAVRDIHPSHYGRLCPIETPEGPNAGLINSLATHARVNEYGFIETPFWKVENGRLIKEGDPIYLSADLEDECRVAPGDVATNEEGKIMAELVPVRYRQDFETVSPEQVDYVQLSPVQVISVAASLIPFLEHDDANRALMGSNMQRQAVPLLRPERPLVGTGLETQVARDSGMVPISKVNGKVTYVDANAIVVTDDEGNDHTHYLQKYQRSNQDTCLNHRPIVFNGDPVIVGQVLADGSACEGGEIALGQNVLIAYMPWEGYNYEDAILVSERLVKDDLYTSVHIEKYEIEARQTKLGPEEITREIPNVSEENLGNLDEMGIIRIGAYVESGDILVGKVTPKGESDQPPEEKLLRAIFGEKARDVRDNSLRVPSTERGRVVDVRIYTREQGDELPPGANMVVRVYVAQRRKIQVGDKMAGRHGNKGIISRILPREDMPYLPDGTPVDICLNPLGVPSRMNVGQVFELLMGWAASNLDCRVKIVPFDEMYGPEMSNQTVQAYLKKAAKQPGKSWVYNPKDPGKLLLKDGRTGEPFDQPVAVGYAHFLKLVHLVDDKIHARSTGPYSLVTQQPLGGKAQQGGQRLGEMEVWALEAYGAAYTLQELLTVKSDDMQGRNEALNSIVKGKPIPRPGTPESFKVLMRELQSLGLDIGVYTDDGKEVDLMQDVNPRRSTPSRPTYESLGKEYEE.

Residues 1069–1095 (DLMQDVNPRRSTPSRPTYESLGKEYEE) are disordered.

The protein belongs to the RNA polymerase beta chain family. In cyanobacteria the RNAP catalytic core is composed of 2 alpha, 1 beta, 1 beta', 1 gamma and 1 omega subunit. When a sigma factor is associated with the core the holoenzyme is formed, which can initiate transcription.

It catalyses the reaction RNA(n) + a ribonucleoside 5'-triphosphate = RNA(n+1) + diphosphate. DNA-dependent RNA polymerase catalyzes the transcription of DNA into RNA using the four ribonucleoside triphosphates as substrates. In Prochlorococcus marinus (strain NATL2A), this protein is DNA-directed RNA polymerase subunit beta.